The sequence spans 372 residues: NAD(P)H-quinone oxidoreductase subunit 1 (372 aa).

The next 8 helical transmembrane spans lie at 27–47 (IIWLPLPMLIVLVSAVVGVLV), 97–117 (ILFTTGPILVLVPVILSWLIV), 128–148 (VGIGIFLWIALSSIQPIGLLM), 176–196 (LALSVLAVVLMTNSLSTIDIV), 204–224 (ILSWNIWRQPVGFIIFWICAL), 266–286 (ILSALLVSILYLGGWGFPIPV), 308–328 (SIGIIMTVLKAYLLVFIAILL), and 347–367 (FLLPISLANLLLTAGLKLALP).

The protein belongs to the complex I subunit 1 family. In terms of assembly, NDH-1 is composed of at least 11 different subunits.

Its subcellular location is the cellular thylakoid membrane. It catalyses the reaction a plastoquinone + NADH + (n+1) H(+)(in) = a plastoquinol + NAD(+) + n H(+)(out). It carries out the reaction a plastoquinone + NADPH + (n+1) H(+)(in) = a plastoquinol + NADP(+) + n H(+)(out). Functionally, NDH-1 shuttles electrons from an unknown electron donor, via FMN and iron-sulfur (Fe-S) centers, to quinones in the respiratory and/or the photosynthetic chain. The immediate electron acceptor for the enzyme in this species is believed to be plastoquinone. Couples the redox reaction to proton translocation, and thus conserves the redox energy in a proton gradient. The chain is NAD(P)H-quinone oxidoreductase subunit 1 from Prochlorococcus marinus (strain MIT 9515).